The chain runs to 454 residues: Guanine deaminase (454 aa).

The Zn(2+) site is built by His82 and His84. Residues 84-87 (HAPQ), 213-214 (RF), 240-243 (HISE), and Asp330 contribute to the substrate site. Residues His240 and Asp330 each contribute to the Zn(2+) site. Ser453 carries the phosphoserine modification.

The protein belongs to the metallo-dependent hydrolases superfamily. ATZ/TRZ family. In terms of assembly, homodimer. It depends on Zn(2+) as a cofactor.

The catalysed reaction is guanine + H2O + H(+) = xanthine + NH4(+). Its pathway is purine metabolism; guanine degradation; xanthine from guanine: step 1/1. Functionally, catalyzes the hydrolytic deamination of guanine, producing xanthine and ammonia. The protein is Guanine deaminase (Gda) of Rattus norvegicus (Rat).